Reading from the N-terminus, the 237-residue chain is Ribonuclease PH (237 aa).

Phosphate is bound by residues R86 and 124–126 (GTR).

It belongs to the RNase PH family. In terms of assembly, homohexameric ring arranged as a trimer of dimers.

It carries out the reaction tRNA(n+1) + phosphate = tRNA(n) + a ribonucleoside 5'-diphosphate. Its function is as follows. Phosphorolytic 3'-5' exoribonuclease that plays an important role in tRNA 3'-end maturation. Removes nucleotide residues following the 3'-CCA terminus of tRNAs; can also add nucleotides to the ends of RNA molecules by using nucleoside diphosphates as substrates, but this may not be physiologically important. Probably plays a role in initiation of 16S rRNA degradation (leading to ribosome degradation) during starvation. The sequence is that of Ribonuclease PH from Myxococcus xanthus (strain DK1622).